Here is a 207-residue protein sequence, read N- to C-terminus: Cytochrome c biogenesis ATP-binding export protein CcmA (207 aa).

Residues 4-207 (LEARELLCER…RISLTQTRAA (204 aa)) form the ABC transporter domain. Residue 36 to 43 (GSNGAGKT) coordinates ATP.

The protein belongs to the ABC transporter superfamily. CcmA exporter (TC 3.A.1.107) family. The complex is composed of two ATP-binding proteins (CcmA) and two transmembrane proteins (CcmB).

It localises to the cell inner membrane. The catalysed reaction is heme b(in) + ATP + H2O = heme b(out) + ADP + phosphate + H(+). Its function is as follows. Part of the ABC transporter complex CcmAB involved in the biogenesis of c-type cytochromes; once thought to export heme, this seems not to be the case, but its exact role is uncertain. Responsible for energy coupling to the transport system. The polypeptide is Cytochrome c biogenesis ATP-binding export protein CcmA (Shigella boydii serotype 4 (strain Sb227)).